A 500-amino-acid polypeptide reads, in one-letter code: Kynurenine 3-monooxygenase (500 aa).

Belongs to the aromatic-ring hydroxylase family. KMO subfamily. FAD is required as a cofactor.

The protein resides in the mitochondrion outer membrane. It carries out the reaction L-kynurenine + NADPH + O2 + H(+) = 3-hydroxy-L-kynurenine + NADP(+) + H2O. Its pathway is cofactor biosynthesis; NAD(+) biosynthesis; quinolinate from L-kynurenine: step 1/3. Catalyzes the hydroxylation of L-kynurenine (L-Kyn) to form 3-hydroxy-L-kynurenine (L-3OHKyn). Required for synthesis of quinolinic acid. This chain is Kynurenine 3-monooxygenase (bna4), found in Aspergillus terreus (strain NIH 2624 / FGSC A1156).